The following is a 353-amino-acid chain: D-alanine--D-alanine ligase (353 aa).

In terms of domain architecture, ATP-grasp spans 141–349; sequence KAAFAAAGLP…LPDLVAQLVH (209 aa). ATP is bound at residue 176–231; sequence EAELGYPCFVKPANMGSSVGISKARHRDQLLAGLKEAARHDTRLVVEHGVSARELE. Mg(2+)-binding residues include Asp-302, Glu-316, and Asn-318.

It belongs to the D-alanine--D-alanine ligase family. It depends on Mg(2+) as a cofactor. Mn(2+) serves as cofactor.

It is found in the cytoplasm. The catalysed reaction is 2 D-alanine + ATP = D-alanyl-D-alanine + ADP + phosphate + H(+). The protein operates within cell wall biogenesis; peptidoglycan biosynthesis. Cell wall formation. This chain is D-alanine--D-alanine ligase, found in Synechococcus sp. (strain CC9311).